We begin with the raw amino-acid sequence, 841 residues long: Microcephalin (841 aa).

Residues 1–93 (MAAPILKDVV…AHIDESLFPA (93 aa)) enclose the BRCT 1 domain. Phosphoserine is present on residues serine 278, serine 286, serine 295, and serine 332. Phosphothreonine is present on threonine 334. 4 disordered regions span residues 340-375 (GHLL…RKRS), 417-445 (PDNL…SCRS), 481-507 (SSPQ…SAPE), and 562-593 (VGLK…PRSV). Residues 342 to 358 (LLIHSRPRSSSVKRKRV) show a composition bias toward basic residues. The segment covering 433 to 445 (QLPSSPAQFSCRS) has biased composition (polar residues). Polar residues predominate over residues 565-583 (KSTQDKGTTSKISNSSEGE). BRCT domains lie at 646–736 (SGKG…SFEL) and 757–839 (YRGT…NYLL).

Interacts with CDC27 and maybe other components of the APC/C complex. Interacts with histone variant H2AX under DNA damage conditions.

Its subcellular location is the cytoplasm. The protein localises to the cytoskeleton. It localises to the microtubule organizing center. It is found in the centrosome. Functionally, implicated in chromosome condensation and DNA damage induced cellular responses. May play a role in neurogenesis and regulation of the size of the cerebral cortex. The protein is Microcephalin of Colobus guereza (Mantled guereza).